The chain runs to 315 residues: Heme oxygenase 2 (315 aa).

Residues 1–15 (MSSEVETSEGVDESE) are compositionally biased toward polar residues. The disordered stretch occupies residues 1 to 29 (MSSEVETSEGVDESENNSTAPEKENHTKM). Serine 2 is subject to N-acetylserine. Serine 2 carries the post-translational modification Phosphoserine. Residues 2–294 (SSEVETSEGV…TAMAVLRKPS (293 aa)) are Cytoplasmic-facing. Residues histidine 44, tyrosine 153, lysine 198, and arginine 202 each contribute to the heme b site. HRM repeat units follow at residues 263 to 268 (KCPFYA) and 280 to 285 (NCPFRT). 2 positions are modified to S-nitrosocysteine: cysteine 264 and cysteine 281. The helical; Anchor for type IV membrane protein transmembrane segment at 295–315 (LQLILAASVALVAGLLAWYYM) threads the bilayer.

Belongs to the heme oxygenase family. Post-translationally, a soluble form arises by proteolytic removal of the membrane anchor. In terms of processing, S-nitrosylated by BLVRB. As to expression, widely distributed in body with a high concentration in the brain.

It is found in the microsome membrane. It localises to the endoplasmic reticulum membrane. The catalysed reaction is heme b + 3 reduced [NADPH--hemoprotein reductase] + 3 O2 = biliverdin IXalpha + CO + Fe(2+) + 3 oxidized [NADPH--hemoprotein reductase] + 3 H2O + H(+). Its activity is regulated as follows. Inhibited by metalloporphyrins such as Sn- and Zn-protoporphyrins. Catalyzes the oxidative cleavage of heme at the alpha-methene bridge carbon, released as carbon monoxide (CO), to generate biliverdin IXalpha, while releasing the central heme iron chelate as ferrous iron. The chain is Heme oxygenase 2 (Hmox2) from Rattus norvegicus (Rat).